Reading from the N-terminus, the 414-residue chain is Histidine--tRNA ligase (414 aa).

It belongs to the class-II aminoacyl-tRNA synthetase family. As to quaternary structure, homodimer.

Its subcellular location is the cytoplasm. It catalyses the reaction tRNA(His) + L-histidine + ATP = L-histidyl-tRNA(His) + AMP + diphosphate + H(+). The chain is Histidine--tRNA ligase from Rickettsia africae (strain ESF-5).